The following is an 84-amino-acid chain: Large ribosomal subunit protein bL27 (84 aa).

Residues 1 to 23 are disordered; the sequence is MAHKKGASSSRNGRESAAQRLGV.

It belongs to the bacterial ribosomal protein bL27 family.

The protein is Large ribosomal subunit protein bL27 of Salinispora arenicola (strain CNS-205).